A 463-amino-acid polypeptide reads, in one-letter code: tRNA modification GTPase MnmE (463 aa).

R27, E92, and K131 together coordinate (6S)-5-formyl-5,6,7,8-tetrahydrofolate. A TrmE-type G domain is found at G234–S386. Residue N244 participates in K(+) binding. GTP is bound by residues N244–S249, T263–T269, and D288–G291. S248 serves as a coordination point for Mg(2+). Residues T263, V265, and T268 each coordinate K(+). T269 is a binding site for Mg(2+). K463 is a (6S)-5-formyl-5,6,7,8-tetrahydrofolate binding site.

It belongs to the TRAFAC class TrmE-Era-EngA-EngB-Septin-like GTPase superfamily. TrmE GTPase family. In terms of assembly, homodimer. Heterotetramer of two MnmE and two MnmG subunits. The cofactor is K(+).

It is found in the cytoplasm. In terms of biological role, exhibits a very high intrinsic GTPase hydrolysis rate. Involved in the addition of a carboxymethylaminomethyl (cmnm) group at the wobble position (U34) of certain tRNAs, forming tRNA-cmnm(5)s(2)U34. The protein is tRNA modification GTPase MnmE of Mycoplasmopsis synoviae (strain 53) (Mycoplasma synoviae).